We begin with the raw amino-acid sequence, 148 residues long: Leghemoglobin 29 (148 aa).

In terms of domain architecture, Globin spans 2–148 (EFTLRQEALV…LAVAIMKEMS (147 aa)). Nitrated tyrosine is present on Tyr30. Ser45 contacts heme b. Ser45 bears the Phosphoserine mark. His63 is a binding site for O2. His95 and Lys98 together coordinate heme b. Tyr136 carries the post-translational modification Nitrated tyrosine.

The protein belongs to the plant globin family. Monomer. In terms of processing, nitrated in effective nodules and particularly in hypoxic conditions; this mechanism may play a protective role in the symbiosis by buffering toxic peroxynitrite NO(2)(-). Nitration level decrease during nodule senescence. Post-translationally, phosphorylation at Ser-45 disrupts the molecular environment of its porphyrin ring oxygen binding pocket, thus leading to a reduced oxygen consumption and to the delivery of oxygen O(2) to symbiosomes. In terms of tissue distribution, accumulates in root nodules after inoculation by bacteria of the genus Rhizobium. Expressed in mycorrhizal roots in the presence of the mycorrhizal fungus Glomus fasciculatum.

It is found in the cytoplasm. The protein resides in the cytosol. Its subcellular location is the nucleus. Its function is as follows. Leghemoglobin that reversibly binds oxygen O(2) through a pentacoordinated heme iron. In root nodules, facilitates the diffusion of oxygen to the bacteroids while preventing the bacterial nitrogenase from being inactivated by buffering dioxygen, nitric oxide and carbon monoxide, and promoting the formation of reactive oxygen species (ROS, e.g. H(2)O(2)). This role is essential for symbiotic nitrogen fixation (SNF). The protein is Leghemoglobin 29 of Vicia faba (Broad bean).